The chain runs to 336 residues: Fructose-1,6-bisphosphatase class 1 (336 aa).

The Mg(2+) site is built by Glu-92, Asp-115, Leu-117, and Asp-118. Residues 118 to 121 (DGSS), Asn-211, Tyr-244, 262 to 264 (YLY), and Lys-274 contribute to the substrate site. Glu-280 contributes to the Mg(2+) binding site.

It belongs to the FBPase class 1 family. As to quaternary structure, homotetramer. Mg(2+) is required as a cofactor.

The protein resides in the cytoplasm. It catalyses the reaction beta-D-fructose 1,6-bisphosphate + H2O = beta-D-fructose 6-phosphate + phosphate. The protein operates within carbohydrate biosynthesis; gluconeogenesis. This is Fructose-1,6-bisphosphatase class 1 from Aliivibrio fischeri (strain ATCC 700601 / ES114) (Vibrio fischeri).